Consider the following 424-residue polypeptide: 3-oxo-tetronate kinase (424 aa).

ATP is bound by residues Ser264, Gly363 to Thr366, and Gly408.

The protein belongs to the four-carbon acid sugar kinase family.

It carries out the reaction 3-dehydro-L-erythronate + ATP = 3-dehydro-4-O-phospho-L-erythronate + ADP + H(+). It catalyses the reaction 3-dehydro-D-erythronate + ATP = 3-dehydro-4-O-phospho-D-erythronate + ADP + H(+). Its function is as follows. Catalyzes the ATP-dependent phosphorylation of 3-oxo-tetronate to 3-oxo-tetronate 4-phosphate. The polypeptide is 3-oxo-tetronate kinase (Methylobacterium radiotolerans (strain ATCC 27329 / DSM 1819 / JCM 2831 / NBRC 15690 / NCIMB 10815 / 0-1)).